The chain runs to 157 residues: Phosphopantetheine adenylyltransferase (157 aa).

Residue threonine 10 coordinates substrate. ATP-binding positions include 10-11 and histidine 18; that span reads TF. 3 residues coordinate substrate: lysine 42, leucine 74, and arginine 88. Residues 89–91, glutamate 99, and 124–130 each bind ATP; these read GLR and NAFISSS.

Belongs to the bacterial CoaD family. Homohexamer. Requires Mg(2+) as cofactor.

It is found in the cytoplasm. It catalyses the reaction (R)-4'-phosphopantetheine + ATP + H(+) = 3'-dephospho-CoA + diphosphate. Its pathway is cofactor biosynthesis; coenzyme A biosynthesis; CoA from (R)-pantothenate: step 4/5. Functionally, reversibly transfers an adenylyl group from ATP to 4'-phosphopantetheine, yielding dephospho-CoA (dPCoA) and pyrophosphate. This is Phosphopantetheine adenylyltransferase from Helicobacter pylori (strain Shi470).